Consider the following 423-residue polypeptide: MDIDEDEDFYAPDEPQAAPPTTAATTTTPATTTTTAAPTTTTTTTSTTTASAPPTTTSSSTKPEDELEEGEEEDEGGGAMDEDDDSDIDIITERKDGSAPPPPVQSRYSEIRNIPQRAAANDNGVKTAPVKKSDGTNSNSNSSSNKFGGGGGIGNEQKTRQGSGAAGGSGAELPPVRTSKIEVDGIPVYKPVGKPITGVVIDEDLPENDKPWRKPGTDLSDYFNYGFDEFTWALYAQKQEALRGEYNAEAIAANNKKMMEEMTNMMMMGGMMPPGMGGPGGPGVGPAGPGAMGPGGPAGAGGMGGPGGGLDGMPPEMQAMMQQMMGAAAAQGMDPSQMGQMGMAGGPGDMGGMGGMFGGPGGGPGGPGTGGMGPGGPGGQGGQGQQFGGGFGGNQGQGGYGGYDQMGGAGGGGRGGRGRGRRW.

Positions 1-11 (MDIDEDEDFYA) are enriched in acidic residues. Disordered regions lie at residues 1-178 (MDID…PVRT), 278-307 (GPGG…GGPG), and 360-423 (PGGG…GRRW). The segment covering 19-61 (PPTTAATTTTPATTTTTAAPTTTTTTTSTTTASAPPTTTSSST) has biased composition (low complexity). Over residues 65–90 (DELEEGEEEDEGGGAMDEDDDSDIDI) the composition is skewed to acidic residues. Positions 135 to 146 (GTNSNSNSSSNK) are enriched in low complexity. A compositionally biased stretch (gly residues) spans 360–415 (PGGGPGGPGTGGMGPGGPGGQGGQGQQFGGGFGGNQGQGGYGGYDQMGGAGGGGRG).

It belongs to the FIP1 family.

The protein resides in the nucleus. Pre-mRNA polyadenylation factor that directly interacts with poly(A) polymerase. The sequence is that of Pre-mRNA polyadenylation factor fip-1 (fip-1) from Neurospora crassa (strain ATCC 24698 / 74-OR23-1A / CBS 708.71 / DSM 1257 / FGSC 987).